A 104-amino-acid chain; its full sequence is DET1- and DDB1-associated protein 1 (104 aa).

Positions 67–77 (KKNAAKKREQE) are enriched in basic and acidic residues. Residues 67–104 (KKNAAKKREQEQAEGEGGSPAPPRKIARTDSQEMNEDS) form a disordered region.

It belongs to the DDA1 family. Component of numerous DCX (DDB1-CUL4-X-box) E3 ubiquitin-protein ligase complexes which consist of a core of DDB1, cullin-4 (CUL4A or CUL4B), DDA1 and RBX1.

The protein operates within protein modification; protein ubiquitination. Its function is as follows. Functions as a component of numerous distinct DCX (DDB1-CUL4-X-box) E3 ubiquitin-protein ligase complexes which mediate the ubiquitination and subsequent proteasomal degradation of target proteins. In the DCX complexes, acts as a scaffolding subunit required to stabilize the complex. This chain is DET1- and DDB1-associated protein 1, found in Danio rerio (Zebrafish).